We begin with the raw amino-acid sequence, 286 residues long: Urease accessory protein UreD 2 (286 aa).

Belongs to the UreD family. As to quaternary structure, ureD, UreF and UreG form a complex that acts as a GTP-hydrolysis-dependent molecular chaperone, activating the urease apoprotein by helping to assemble the nickel containing metallocenter of UreC. The UreE protein probably delivers the nickel.

It is found in the cytoplasm. Required for maturation of urease via the functional incorporation of the urease nickel metallocenter. The polypeptide is Urease accessory protein UreD 2 (Bradyrhizobium sp. (strain ORS 278)).